Here is a 252-residue protein sequence, read N- to C-terminus: MAVERVSTGIPGMDEVLNGGIPERNAVLLTGGPGTGKTIFSQQFIWAGLEEGEPGVFVTLEEHPVQVRKNVEGFGWNFREYEEEGLLAVVDAFTGGIGRASEYEKYVVKDPTDASELIGVIRQAVNDVEAKRVAIDSVTPLYIDKPSVARRIMFRLKRMLAGLGCTSILVNQIAAHERGFGGPGVEHAVDGIIRLDLDEVEGRLWRSLIVWKMRGTAHSMRRHPFEITDEGIRVDPEKVFVKERGEVREVED.

One can recognise a KaiC domain in the interval 4–248; that stretch reads ERVSTGIPGM…VFVKERGEVR (245 aa). 31–38 contributes to the ATP binding site; the sequence is GGPGTGKT.

Belongs to the UPF0273 family.

This is UPF0273 protein MK0039 from Methanopyrus kandleri (strain AV19 / DSM 6324 / JCM 9639 / NBRC 100938).